Reading from the N-terminus, the 121-residue chain is Large ribosomal subunit protein uL18 (121 aa).

Belongs to the universal ribosomal protein uL18 family. In terms of assembly, part of the 50S ribosomal subunit; part of the 5S rRNA/L5/L18/L25 subcomplex. Contacts the 5S and 23S rRNAs.

Functionally, this is one of the proteins that bind and probably mediate the attachment of the 5S RNA into the large ribosomal subunit, where it forms part of the central protuberance. This chain is Large ribosomal subunit protein uL18, found in Leptothrix cholodnii (strain ATCC 51168 / LMG 8142 / SP-6) (Leptothrix discophora (strain SP-6)).